Consider the following 283-residue polypeptide: BTB/POZ domain-containing protein KCTD15 (283 aa).

The tract at residues 1-33 is disordered; sequence MPHRKERPSGSSLNAHGSSGTAEGGNMSRLSLT. The span at 9–21 shows a compositional bias: polar residues; sequence SGSSLNAHGSSGT. Phosphoserine is present on residues S31, S35, and S38. Residues 56-126 enclose the BTB domain; sequence APVHIDVGGH…LRTSKLLLPD (71 aa).

As to quaternary structure, forms oligomers, predominantly homopentamers. Interacts with KCTD1, probably forming heteropentamers depending on its abundance in a cell-type dependent manner. Interacts with TFAP2A; this interaction inhibits TFAP2A transcriptional activation. As to expression, expressed in the cerebral cortex, cerebellum, and hypothalamus (at protein level). Expressed in the arcuate hypothalamic nucleus, the ventromedial hypothalamic nucleus and the accumbens nucleus of the ventral striatum.

The protein resides in the nucleus. During embryonic development, interferes with neural crest formation. Inhibits AP2 transcriptional activity by interaction with its activation domain. This is BTB/POZ domain-containing protein KCTD15 (Kctd15) from Mus musculus (Mouse).